Consider the following 184-residue polypeptide: TRAF-interacting protein with FHA domain-containing protein A (184 aa).

Phosphothreonine; by ALPK1 is present on Thr9. Residues 47 to 103 (VKFGRNSNICHYTFQDKQVSRVQFSLQLFKKFNSSVLSFEIKNMSKKTNLIVDSREL) enclose the FHA domain. The disordered stretch occupies residues 165-184 (TYSLCSSQSSSPTEMDENES). Positions 167 to 177 (SLCSSQSSSPT) are enriched in polar residues.

This sequence belongs to the TIFA family. In terms of assembly, homooligomer; homooligomerizes following phosphorylation at Thr-9. Interacts with IRAK1, TRAF2 and TRAF6. Interacts with TIFAB; binding to TIFAB inhibits TRAF6 activation, possibly by inducing a conformational change in TIFA. Interacts with ZCCHC11; binding to ZCCHC11 suppresses the TRAF6-dependent activation of NF-kappa-B. Post-translationally, phosphorylated at Thr-9 following detection of ADP-D-glycero-beta-D-manno-heptose (ADP-Heptose) by ALPK1. Phosphorylation at Thr-9 by ALPK1 leads to the formation of an intermolecular binding between the FHA domain and phosphorylated Thr-9, promoting TIFA oligomerization and TIFA-mediated NF-kappa-B activation.

It localises to the cytoplasm. Functionally, adapter molecule that plays a key role in the activation of pro-inflammatory NF-kappa-B signaling following detection of bacterial pathogen-associated molecular pattern metabolites (PAMPs). Promotes activation of an innate immune response by inducing the oligomerization and polyubiquitination of TRAF6, which leads to the activation of TAK1 and IKK through a proteasome-independent mechanism. TIFA-dependent innate immune response is triggered by ADP-D-glycero-beta-D-manno-heptose (ADP-Heptose), a potent PAMP present in all Gram-negative and some Gram-positive bacteria: ADP-Heptose is recognized by ALPK1, which phosphorylates TIFA at Thr-9, leading to TIFA homooligomerization and subsequent activation of pro-inflammatory NF-kappa-B signaling. This is TRAF-interacting protein with FHA domain-containing protein A from Homo sapiens (Human).